The chain runs to 654 residues: tRNA 5-methylaminomethyl-2-thiouridine biosynthesis bifunctional protein MnmC (654 aa).

The segment at 1–236 is tRNA (mnm(5)s(2)U34)-methyltransferase; the sequence is MPTLLQHAQI…KWEVMSGAYV (236 aa). The interval 262–654 is FAD-dependent cmnm(5)s(2)U34 oxidoreductase; sequence IGAGLAGSSS…FGLRRLIRGK (393 aa).

In the N-terminal section; belongs to the methyltransferase superfamily. tRNA (mnm(5)s(2)U34)-methyltransferase family. This sequence in the C-terminal section; belongs to the DAO family. Requires FAD as cofactor.

It localises to the cytoplasm. The catalysed reaction is 5-aminomethyl-2-thiouridine(34) in tRNA + S-adenosyl-L-methionine = 5-methylaminomethyl-2-thiouridine(34) in tRNA + S-adenosyl-L-homocysteine + H(+). In terms of biological role, catalyzes the last two steps in the biosynthesis of 5-methylaminomethyl-2-thiouridine (mnm(5)s(2)U) at the wobble position (U34) in tRNA. Catalyzes the FAD-dependent demodification of cmnm(5)s(2)U34 to nm(5)s(2)U34, followed by the transfer of a methyl group from S-adenosyl-L-methionine to nm(5)s(2)U34, to form mnm(5)s(2)U34. The protein is tRNA 5-methylaminomethyl-2-thiouridine biosynthesis bifunctional protein MnmC of Pseudomonas putida (strain ATCC 47054 / DSM 6125 / CFBP 8728 / NCIMB 11950 / KT2440).